Here is a 902-residue protein sequence, read N- to C-terminus: 4-hydroxyphenylacetate decarboxylase glycyl radical subunit (902 aa).

One can recognise a PFL domain in the interval 38–774 (KRAEDLLDVY…ATLATPDGRL (737 aa)). 2 residues coordinate 4-hydroxyphenylacetate: S348 and C507. Residue C507 is the Cysteine radical intermediate of the active site. Residue E509 is the Proton donor of the active site. H540 and E641 together coordinate 4-hydroxyphenylacetate. The region spanning 782–902 (GSVSAYAGTD…VIARTEYEGV (121 aa)) is the Glycine radical domain. G877 carries the glycine radical modification.

Belongs to the glycyl radical enzyme (GRE) family. HPAD subfamily. Heterooctamer consisting of 4 large (HpdB) subunits and 4 small (HpdC) subunits, arranged as a tetramer of heterodimers. Also forms a catalytically inactive homodimer. In terms of processing, requires the activating protein CsdA to generate the key active site glycyl radical that is involved in catalysis. Post-translationally, phosphorylated on serine. Phosphorylation may trigger the formation of the active heterooctamers and thereby regulates enzyme activity.

It carries out the reaction 4-hydroxyphenylacetate + H(+) = 4-methylphenol + CO2. It catalyses the reaction 3,4-dihydroxyphenylacetate + H(+) = 4-methylcatechol + CO2. In terms of biological role, glycyl radical subunit of the HPA decarboxylase that decarboxylates phenylacetates with a hydroxyl group in the p-position. Active toward 4-hydroxyphenylacetate and 3,4-dihydroxyphenylacetate, forming 4-methylphenol and 4-methylcatechol, respectively. Is likely involved in the catabolism of aromatic amino acids such as tyrosine fermentation. 4-methylphenol (p-cresol) formation provides metabolic toxicity, which allows an active suppression of other microbes and may provide growth advantages for the producers in highly competitive environments. The large subunit is the catalytic subunit that binds the substrate. This chain is 4-hydroxyphenylacetate decarboxylase glycyl radical subunit, found in Clostridioides difficile (strain CD196) (Peptoclostridium difficile).